The primary structure comprises 629 residues: tRNA uridine 5-carboxymethylaminomethyl modification enzyme MnmG (629 aa).

Position 13-18 (13-18 (GGGHAG)) interacts with FAD. 273 to 287 (GPRYCPSIEDKITRF) serves as a coordination point for NAD(+).

Belongs to the MnmG family. Homodimer. Heterotetramer of two MnmE and two MnmG subunits. FAD is required as a cofactor.

It is found in the cytoplasm. NAD-binding protein involved in the addition of a carboxymethylaminomethyl (cmnm) group at the wobble position (U34) of certain tRNAs, forming tRNA-cmnm(5)s(2)U34. In Colwellia psychrerythraea (strain 34H / ATCC BAA-681) (Vibrio psychroerythus), this protein is tRNA uridine 5-carboxymethylaminomethyl modification enzyme MnmG.